A 131-amino-acid chain; its full sequence is Profilin-1 (131 aa).

This sequence belongs to the profilin family. Occurs in many kinds of cells as a complex with monomeric actin in a 1:1 ratio.

Its subcellular location is the cytoplasm. It localises to the cytoskeleton. In terms of biological role, binds to actin and affects the structure of the cytoskeleton. At high concentrations, profilin prevents the polymerization of actin, whereas it enhances it at low concentrations. By binding to PIP2, it inhibits the formation of IP3 and DG. The polypeptide is Profilin-1 (Hevea brasiliensis (Para rubber tree)).